Consider the following 258-residue polypeptide: 5'-nucleotidase SurE (258 aa).

Aspartate 14, aspartate 15, serine 45, and asparagine 101 together coordinate a divalent metal cation.

The protein belongs to the SurE nucleotidase family. A divalent metal cation is required as a cofactor.

The protein localises to the cytoplasm. The catalysed reaction is a ribonucleoside 5'-phosphate + H2O = a ribonucleoside + phosphate. Nucleotidase that shows phosphatase activity on nucleoside 5'-monophosphates. The sequence is that of 5'-nucleotidase SurE from Chlorobium limicola (strain DSM 245 / NBRC 103803 / 6330).